Reading from the N-terminus, the 336-residue chain is MKFVDEATLIVQSGDGGRGCVSFRRERFIPRGGPDGGNGGKGGDVVLVATRAKHTLYHFRYKHRFQAQRGGYGSGANRHGKNGEDLLIEVPVGTIVRDAETSEIIADLSVEEERCIVCHGGRGGKGNKHFTSSTYRAPRFAQDGEEGEEKTLKLELKLLADVGLVGLPNAGKSSLITALTAARPKIGAYPFTTLAPSLGVLQDPYGEPVVIADIPGLIEGAAQGAGLGHRFLRHIERNRLLIHLIDASQVTAEDPLASYQAINKELSSYDQALGEKPQIVVLNKMDLPEAEEGACLFKQSCGNLQVLQISAILGEGLDELIEAIFAQLREPGRRPS.

In terms of domain architecture, Obg spans 1-159; it reads MKFVDEATLI…KTLKLELKLL (159 aa). One can recognise an OBG-type G domain in the interval 160–329; it reads ADVGLVGLPN…LIEAIFAQLR (170 aa). Residues 166–173, 191–195, 213–216, 283–286, and 310–312 each bind GTP; these read GLPNAGKS, FTTLA, DIPG, NKMD, and SAI. Residues Ser173 and Thr193 each contribute to the Mg(2+) site.

This sequence belongs to the TRAFAC class OBG-HflX-like GTPase superfamily. OBG GTPase family. As to quaternary structure, monomer. Mg(2+) is required as a cofactor.

The protein resides in the cytoplasm. An essential GTPase which binds GTP, GDP and possibly (p)ppGpp with moderate affinity, with high nucleotide exchange rates and a fairly low GTP hydrolysis rate. Plays a role in control of the cell cycle, stress response, ribosome biogenesis and in those bacteria that undergo differentiation, in morphogenesis control. The polypeptide is GTPase Obg (Desulfatibacillum aliphaticivorans).